Here is an 832-residue protein sequence, read N- to C-terminus: Tuftelin-interacting protein 11 (832 aa).

Disordered stretches follow at residues 1-21 (MSMS…GVEI) and 33-145 (NEFN…GNWE). Basic and acidic residues-rich tracts occupy residues 36–49 (NPDR…KEEA) and 88–99 (TAAEEKAEREGS). Polar residues predominate over residues 121–130 (TGGSFKTSQR). Residues 148-194 (TRGIGQKLLQKMGYVPGKGLGKNAQGIVNPIEAKLRKGKGAVGAYGS) form the G-patch domain. A Phosphoserine modification is found at Ser209.

This sequence belongs to the TFP11/STIP family. In terms of assembly, identified in the spliceosome C complex.

It is found in the nucleus. Functionally, involved in pre-mRNA splicing, specifically in spliceosome disassembly during late-stage splicing events. The protein is Tuftelin-interacting protein 11 (tfip11) of Danio rerio (Zebrafish).